We begin with the raw amino-acid sequence, 473 residues long: Ribulose bisphosphate carboxylase large chain (473 aa).

The substrate site is built by Asn-116 and Thr-166. Lys-168 functions as the Proton acceptor in the catalytic mechanism. Lys-170 lines the substrate pocket. Mg(2+) is bound by residues Lys-194, Asp-196, and Glu-197. Lys-194 bears the N6-carboxylysine mark. Residue His-287 is the Proton acceptor of the active site. Substrate-binding residues include Arg-288, His-320, and Ser-372.

Belongs to the RuBisCO large chain family. Type I subfamily. As to quaternary structure, heterohexadecamer of 8 large chains and 8 small chains. In R.sphaeroides the complex is approximately 500 kDa. Mg(2+) is required as a cofactor.

The catalysed reaction is 2 (2R)-3-phosphoglycerate + 2 H(+) = D-ribulose 1,5-bisphosphate + CO2 + H2O. It catalyses the reaction D-ribulose 1,5-bisphosphate + O2 = 2-phosphoglycolate + (2R)-3-phosphoglycerate + 2 H(+). Its function is as follows. RuBisCO catalyzes two reactions: the carboxylation of D-ribulose 1,5-bisphosphate, the primary event in carbon dioxide fixation, as well as the oxidative fragmentation of the pentose substrate. Both reactions occur simultaneously and in competition at the same active site. The sequence is that of Ribulose bisphosphate carboxylase large chain from Thiobacillus denitrificans (strain ATCC 25259 / T1).